Consider the following 513-residue polypeptide: Aromatic amino acid aminotransferase 2 (513 aa).

A phosphoserine mark is found at serine 90 and serine 92. Pyridoxal 5'-phosphate-binding positions include tyrosine 102, 143-144, asparagine 232, tyrosine 263, and 314-316; these read SN and TFS. Asparagine 232 provides a ligand contact to substrate. Lysine 317 carries the post-translational modification N6-(pyridoxal phosphate)lysine. Arginine 324 contributes to the pyridoxal 5'-phosphate binding site. A substrate-binding site is contributed by arginine 481.

This sequence belongs to the class-I pyridoxal-phosphate-dependent aminotransferase family. The cofactor is pyridoxal 5'-phosphate.

The protein localises to the cytoplasm. It carries out the reaction an aromatic L-alpha-amino acid + 2-oxoglutarate = an aromatic oxo-acid + L-glutamate. It catalyses the reaction an aromatic L-alpha-amino acid + 4-methylsulfanyl-2-oxobutanoate = an aromatic oxo-acid + L-methionine. The enzyme catalyses L-kynurenine + 2-oxoglutarate = kynurenate + L-glutamate + H2O. It participates in amino-acid biosynthesis; L-methionine biosynthesis via salvage pathway; L-methionine from S-methyl-5-thio-alpha-D-ribose 1-phosphate: step 6/6. The protein operates within amino-acid degradation; L-kynurenine degradation; kynurenate from L-kynurenine: step 1/2. In terms of biological role, general aromatic amino acid transaminase involved in several otherwise unrelated metabolic pathways. Mainly involved in tryptophan degradation. Active with phenylalanine, tyrosine and tryptophan as amino donors and with phenylpyruvate, hydroxyphenylpyruvate and pyruvate as amino acceptors. Does not accept glutamate or 2-oxoglutarate as substrates. Also active with methionine, leucine, glutamine and kynurenine. Catalyzes the formation of methionine from 2-keto-4-methylthiobutyrate (KMTB) in the methionine salvage pathway primarily using aromatic amino acids (tyrosine, phenylalanine and tryptophan) as the amino donors. Catalyzes the irreversible transamination of the L-tryptophan metabolite L-kynurenine to form kynurenic acid (KA) with pyruvate as amino acceptor. This is Aromatic amino acid aminotransferase 2 from Saccharomyces cerevisiae (strain ATCC 204508 / S288c) (Baker's yeast).